We begin with the raw amino-acid sequence, 130 residues long: Small ribosomal subunit protein uS9 (130 aa).

Belongs to the universal ribosomal protein uS9 family.

This Thiobacillus denitrificans (strain ATCC 25259 / T1) protein is Small ribosomal subunit protein uS9.